A 184-amino-acid chain; its full sequence is Protein GrpE (184 aa).

Residues 1 to 10 (MTDTPPENEE) show a composition bias toward acidic residues. The interval 1-22 (MTDTPPENEEQHESNVQNENEV) is disordered.

It belongs to the GrpE family. In terms of assembly, homodimer.

The protein resides in the cytoplasm. In terms of biological role, participates actively in the response to hyperosmotic and heat shock by preventing the aggregation of stress-denatured proteins, in association with DnaK and GrpE. It is the nucleotide exchange factor for DnaK and may function as a thermosensor. Unfolded proteins bind initially to DnaJ; upon interaction with the DnaJ-bound protein, DnaK hydrolyzes its bound ATP, resulting in the formation of a stable complex. GrpE releases ADP from DnaK; ATP binding to DnaK triggers the release of the substrate protein, thus completing the reaction cycle. Several rounds of ATP-dependent interactions between DnaJ, DnaK and GrpE are required for fully efficient folding. The chain is Protein GrpE from Chlamydia pneumoniae (Chlamydophila pneumoniae).